A 79-amino-acid chain; its full sequence is Small ribosomal subunit protein bS18 (79 aa).

Belongs to the bacterial ribosomal protein bS18 family. Part of the 30S ribosomal subunit. Forms a tight heterodimer with protein bS6.

Binds as a heterodimer with protein bS6 to the central domain of the 16S rRNA, where it helps stabilize the platform of the 30S subunit. In Streptococcus pneumoniae serotype 19F (strain G54), this protein is Small ribosomal subunit protein bS18.